The sequence spans 351 residues: Adenine deaminase (351 aa).

Residues His20, His22, and His200 each contribute to the Zn(2+) site. Glu203 functions as the Proton donor in the catalytic mechanism. Asp281 provides a ligand contact to Zn(2+). Asp282 contributes to the substrate binding site.

This sequence belongs to the metallo-dependent hydrolases superfamily. Adenosine and AMP deaminases family. Adenine deaminase type 2 subfamily. It depends on Zn(2+) as a cofactor.

The catalysed reaction is adenine + H2O + H(+) = hypoxanthine + NH4(+). Catalyzes the hydrolytic deamination of adenine to hypoxanthine. Plays an important role in the purine salvage pathway and in nitrogen catabolism. The polypeptide is Adenine deaminase (Cupriavidus taiwanensis (strain DSM 17343 / BCRC 17206 / CCUG 44338 / CIP 107171 / LMG 19424 / R1) (Ralstonia taiwanensis (strain LMG 19424))).